Consider the following 640-residue polypeptide: PTS system mannitol-specific EIICBA component (640 aa).

Residues 12–343 form the PTS EIIC type-2 domain; that stretch reads LGRFLSAMIM…LKISNRNHYV (332 aa). Transmembrane regions (helical) follow at residues 24-45, 50-70, 134-155, 165-185, 273-292, and 313-334; these read ISVF…WCPN, KVLS…TGGY, SVGI…PMIE, VNLM…EPAK, LILG…GGLI, and VINL…CMLL. A PTS EIIB type-2 domain is found at 379–475; that stretch reads RNIIFACDAG…YLVENNLDNN (97 aa). C385 functions as the Phosphocysteine intermediate; for EIIB activity in the catalytic mechanism. C385 bears the Phosphocysteine; by EIIA mark. The PTS EIIA type-2 domain maps to 496–638; that stretch reads FSLTKENIFL…DDVLYLFSRK (143 aa). Catalysis depends on H556, which acts as the Tele-phosphohistidine intermediate; for EIIA activity. Position 556 is a phosphohistidine; by HPr (H556).

In terms of assembly, homodimer. Post-translationally, an intramolecular phosphotransfer takes places between His-556 and Cys-385.

It localises to the cell inner membrane. It carries out the reaction D-mannitol(out) + N(pros)-phospho-L-histidyl-[protein] = D-mannitol 1-phosphate(in) + L-histidyl-[protein]. Functionally, the phosphoenolpyruvate-dependent sugar phosphotransferase system (sugar PTS), a major carbohydrate active transport system, catalyzes the phosphorylation of incoming sugar substrates concomitantly with their translocation across the cell membrane. This system is involved in D-mannitol transport. The chain is PTS system mannitol-specific EIICBA component (mtlA) from Buchnera aphidicola subsp. Baizongia pistaciae (strain Bp).